Consider the following 602-residue polypeptide: Arginine--tRNA ligase (602 aa).

Residues 138–148 (ANPTGPMHVGH) carry the 'HIGH' region motif.

Belongs to the class-I aminoacyl-tRNA synthetase family. As to quaternary structure, monomer.

It is found in the cytoplasm. It carries out the reaction tRNA(Arg) + L-arginine + ATP = L-arginyl-tRNA(Arg) + AMP + diphosphate. The protein is Arginine--tRNA ligase of Gluconobacter oxydans (strain 621H) (Gluconobacter suboxydans).